A 325-amino-acid polypeptide reads, in one-letter code: Terpene synthase 11 (325 aa).

A DDxx(x)D/E motif motif is present at residues 97–102 (DDEYLE). The NDxxSxxxD/E motif motif lies at 227-235 (NDIYSFVKE).

The protein belongs to the terpene synthase family.

It catalyses the reaction (2E,6E)-farnesyl diphosphate = (E)-beta-farnesene + diphosphate. It carries out the reaction (2E,6E)-farnesyl diphosphate = (3E,6E)-alpha-farnesene + diphosphate. The enzyme catalyses geranylgeranyl diphosphate + H2O = (S)-(+)-nephthenol + diphosphate. Functionally, terpene synthase that converts its substrate farnesyl diphosphate (FPP) into the sesquiterpenes (E)-beta-farnesene and (E,E)-alpha-farnesene. TPS11 also converts geranylgeranyl diphosphate (GGPP) into the diterpene (S)-nephthenol. This is Terpene synthase 11 from Dictyostelium purpureum (Slime mold).